We begin with the raw amino-acid sequence, 1230 residues long: Basic-leucine zipper transcription factor A (1230 aa).

4 disordered regions span residues 65–108, 180–233, 270–310, and 422–578; these read LYLS…NIIN, LNGN…QQHQ, QQLK…PSTQ, and HQQN…RKKD. Composition is skewed to low complexity over residues 69-108, 192-233, 270-287, 295-310, and 422-447; these read NSSN…NIIN, NNFS…QQHQ, QQLK…SPQP, PSLQ…PSTQ, and HQQN…QQQH. Composition is skewed to polar residues over residues 448–458 and 466–475; these read KSTPPTQNTPP and TPTLTTNGKG. Positions 476–503 are enriched in low complexity; sequence SKSTPPTTTTTTTTTTSSSSSSSSSSSS. Residues 523 to 537 show a composition bias toward basic residues; the sequence is PHHHHHHHNNHHHHH. A compositionally biased stretch (acidic residues) spans 541–554; it reads FSDENDEEFIDENE. Residues 555–618 enclose the bZIP domain; the sequence is DKSKNKSRSS…LGDVMRPDFD (64 aa). The basic motif stretch occupies residues 556 to 586; it reads KSKNKSRSSQNIASRNYRQRKKDHISEVEFK. Over residues 562–571 the composition is skewed to polar residues; sequence RSSQNIASRN. A leucine-zipper region spans residues 590–604; that stretch reads LSLENERLKQENHLL. Positions 728-753 form a coiled coil; it reads LKIDMELRTERDQLDREIKELFLKKI. Disordered regions lie at residues 772–869 and 1025–1230; these read TFNS…EHNK and NYTN…TPNI. Low complexity-rich tracts occupy residues 774-803 and 810-831; these read NSES…IITP and NNQN…SNNN. Residues 832–845 are compositionally biased toward basic residues; that stretch reads SHHHHHHHHSHLHG. Positions 1025-1042 are enriched in polar residues; sequence NYTNSPLITSSPSQLTPN. Composition is skewed to low complexity over residues 1052–1146 and 1153–1193; these read NNNN…NNGN and QALH…SPSS.

It belongs to the bZIP family. Binds DNA as a dimer. Heterodimerizes with dimB; in vitro. Also able to form homodimer; in vitro.

The protein localises to the nucleus. In terms of biological role, transcriptional regulator involved in DIF-1 signaling. DIF-1 (Differentiation Inducing Factor-1) is a signal molecule involved in the differentiation of pstO (prestalk-O) cells. Functions both as an activator of prestalk gene expression and a repressor of prespore gene expression. The polypeptide is Basic-leucine zipper transcription factor A (dimA) (Dictyostelium discoideum (Social amoeba)).